A 360-amino-acid chain; its full sequence is DNA replication and repair protein RecF (360 aa).

33-40 (GENGSGKT) serves as a coordination point for ATP.

This sequence belongs to the RecF family.

The protein resides in the cytoplasm. The RecF protein is involved in DNA metabolism; it is required for DNA replication and normal SOS inducibility. RecF binds preferentially to single-stranded, linear DNA. It also seems to bind ATP. This is DNA replication and repair protein RecF from Rickettsia peacockii (strain Rustic).